We begin with the raw amino-acid sequence, 610 residues long: Aspercryptin biosynthesis cluster-specific transcription regulator atnN (610 aa).

Positions 1-26 (MAPKDSQVSASNEMTGNPPSSVQGRS) are enriched in polar residues. The interval 1 to 27 (MAPKDSQVSASNEMTGNPPSSVQGRSR) is disordered. A DNA-binding region (zn(2)-C6 fungal-type) is located at residues 30–57 (CITCRIRRVKCDEERPHCRRCQSTGRKC). 2 disordered regions span residues 61 to 81 (TPLT…KAGS) and 427 to 493 (AGST…LPRP). Low complexity-rich tracts occupy residues 66–79 (QQPK…AAKA) and 437–474 (SRAG…TPTP).

It localises to the nucleus. Functionally, transcription factor that positively regulates the cluster that mediate the production of aspercryptins, linear lipopeptides built from six amino acids including 2 highly unusual and nonproteogenic amino acids, 2-amino-octanoic acid (2aoa) and 2-amino-dodecanol (2adol). The polypeptide is Aspercryptin biosynthesis cluster-specific transcription regulator atnN (Emericella nidulans (strain FGSC A4 / ATCC 38163 / CBS 112.46 / NRRL 194 / M139) (Aspergillus nidulans)).